The sequence spans 420 residues: Putative transporter AmpG 3 (420 aa).

Helical transmembrane passes span 6 to 26 (YLIG…LIFF), 41 to 61 (IVGS…WSPF), 79 to 99 (GWAL…LKRS), 104 to 124 (LCIT…QDIV), 141 to 161 (IAFT…SVGA), 166 to 186 (IIFG…VGPI), 230 to 250 (LLLI…PMAM), 274 to 294 (LLIM…IGIF), 297 to 317 (VLIG…LATI), 324 to 344 (FIIT…IISI), 359 to 381 (YSIS…GICA), and 386 to 406 (WPVF…IFYI).

This sequence belongs to the major facilitator superfamily.

The protein localises to the cell inner membrane. This Rickettsia typhi (strain ATCC VR-144 / Wilmington) protein is Putative transporter AmpG 3 (ampG3).